The chain runs to 1256 residues: Nephrin (1256 aa).

The first 35 residues, 1-35 (MGAKEATVRGPGASPVHRTCHLIPLLLAGMLTTGL), serve as a signal peptide directing secretion. Residues 36–1078 (AQSPVPTSAP…PGPPRLPLLP (1043 aa)) lie on the Extracellular side of the membrane. Ig-like C2-type domains are found at residues 39-144 (PVPT…VILS), 149-247 (PKVL…ASFT), 256-347 (PPVI…RSIT), 354-448 (PSAV…KSLT), 454-554 (PAQK…TQLV), and 558-649 (PPTN…ETVS). Asn54 is a glycosylation site (N-linked (GlcNAc...) asparagine). Cystine bridges form between Cys67-Cys125, Cys174-Cys231, and Cys279-Cys331. Residues Asn370 and Asn415 are each glycosylated (N-linked (GlcNAc...) asparagine). Cys375 and Cys431 are disulfide-bonded. Phosphoserine is present on Ser446. Cys479 and Cys542 are oxidised to a cystine. Residues 491-516 (TWLKDSRPVNDPRQSQEPRRVQLGSV) are disordered. The span at 494–510 (KDSRPVNDPRQSQEPRR) shows a compositional bias: basic and acidic residues. N-linked (GlcNAc...) asparagine glycans are attached at residues Asn561, Asn578, Asn591, and Asn722. Residues Cys581 and Cys637 are joined by a disulfide bond. 2 Ig-like C2-type domains span residues 754–846 (PTIR…LVRL) and 852–953 (PQVD…VSIS). 2 cysteine pairs are disulfide-bonded: Cys775–Cys830 and Cys877–Cys934. The Fibronectin type-III domain maps to 957–1051 (PPLGLKVVSV…GIQVSITTPG (95 aa)). The tract at residues 1048–1071 (TTPGLDQAPEDTDQPLPTEQPPGP) is disordered. The helical transmembrane segment at 1079-1099 (VLFAVGGLLLLSNASCVGGLL) threads the bilayer. Residues 1100–1256 (WRRRLRRLAE…LPFELRGHLV (157 aa)) are Cytoplasmic-facing. At Ser1112 the chain carries Phosphoserine. A compositionally biased stretch (basic and acidic residues) spans 1112–1128 (SEKTEAGSEEDRIRNEY). A disordered region spans residues 1112 to 1143 (SEKTEAGSEEDRIRNEYEESQWTGDRDTRSST). Thr1115 bears the Phosphothreonine mark. Ser1119 bears the Phosphoserine mark. Tyr1208 bears the Phosphotyrosine; by FYN mark.

The protein belongs to the immunoglobulin superfamily. As to quaternary structure, interacts with NPHS2 and with CD2AP (via C-terminal domain). Interacts with MAGI1 (via PDZ 2 and 3 domains) forming a tripartite complex with IGSF5/JAM4. Forms a complex with ACTN4, CASK, IQGAP1, MAGI2, SPTAN1 and SPTBN1. Interacts with DDN; the interaction is direct. Self-associates (via the Ig-like domains). Also interacts (via the Ig-like domains) with KIRREL1 and KIRREL2; the interaction with KIRREL1 is dependent on KIRREL1 glycosylation. Interacts with KIRREL3. Interacts with phosphatidylinositol 3-kinase regulatory subunit PIK3R1; the interaction is reduced by high glucose levels. In terms of processing, phosphorylated at Tyr-1208 by FYN, leading to the recruitment and activation of phospholipase C-gamma-1/PLCG1. Tyrosine phosphorylation is reduced by high glucose levels. Dephosphorylated by tensin TNS2 which leads to reduced binding of NPHN1 to PIK3R1. As to expression, expressed in kidney glomeruli. In the embryo, expressed in the mesonephric kidney at 11 dpc with strong expression in cranial tubules with podocyte-like structures. Expression is observed in the podocytes of the developing kidney from 13 dpc. High expression is also detected in the developing cerebellum, hindbrain, spinal cord, retina and hypothalamus. Expressed in skeletal muscle during myoblast fusion such as in the adult following acute injury and in the embryo but not detected in uninjured adult skeletal muscle. Isoform 1 and isoform 2 are expressed in the newborn brain and developing cerebellum. Isoform 1 is the predominant isoform in adult kidney.

Its subcellular location is the cell membrane. Functionally, seems to play a role in the development or function of the kidney glomerular filtration barrier. Regulates glomerular vascular permeability. May anchor the podocyte slit diaphragm to the actin cytoskeleton. Plays a role in skeletal muscle formation through regulation of myoblast fusion. This is Nephrin (Nphs1) from Mus musculus (Mouse).